A 530-amino-acid chain; its full sequence is Protein SLOW WALKER 1 (530 aa).

WD repeat units lie at residues 50 to 89 (NLVS…SSRR), 91 to 130 (SFRD…ALRT), 133 to 173 (SHSA…VISD), 176 to 216 (GHKD…SNWI), 220 to 258 (NHGL…KMVC), 262 to 304 (SHNK…VTYS), and 320 to 363 (GSTR…DESR). The Nuclear localization signal signature appears at 392 to 399 (EKKGLKLT).

Expressed in cells undergoing active cell divisions, including functional megaspores and the female gametophytic cells. Accumulates in roots, stems, leaves, inflorescences and siliques.

Its subcellular location is the nucleus. It is found in the nucleolus. Its function is as follows. Essential protein required for nuclear division and organization during embryo sac development in female gametophyte, probably by promoting rRNA biogenesis essential for the progression of the mitotic division cycles during gametogenesis. Involved in nucleolar processing of pre-18S ribosomal RNA. This is Protein SLOW WALKER 1 from Arabidopsis thaliana (Mouse-ear cress).